A 351-amino-acid polypeptide reads, in one-letter code: MTIAIGQEKTRGRFDLIDDWVKRDRFVFVGWSGLLLFPCSYLALGGWLTGTTFVTSWYTHGLASSYLEGCNFLTSAVSTPANSMGHSLLLLWGPEAQGDFTRWCQIGGLWAFIALHGSFGLIGFCLRQFEIARLVGIRPYNAIAFSGPIAVFVSVFLMYPLGQASWFFAPSFGVAAIFRFLLFLQGFHNWTLNPFHMMGVAGILGGALLCAIHGATVQNTLFEDGDAADTFRAFTPTQSEETYSMVTANRFWSQIFGVAFSNKRWLHFFMLFVPVTGLWTSAFGIVGLALNLRAYDFVSQELRAAEDPEFETFYTKNILLNEGIRAWMAAQDQPHENFIFPEEVLPRGNAL.

A helical transmembrane segment spans residues 39 to 59 (CSYLALGGWLTGTTFVTSWYT). H116 contacts chlorophyll a. The chain crosses the membrane as a helical span at residues 123-139 (GFCLRQFEIARLVGIRP). 2 residues coordinate pheophytin a: Q128 and N141. Residues 151–164 (VFVSVFLMYPLGQA) traverse the membrane as a helical segment. H196 provides a ligand contact to chlorophyll a. Residues 206 to 226 (GALLCAIHGATVQNTLFEDGD) traverse the membrane as a helical segment. H213 and F260 together coordinate a plastoquinone. H213 contributes to the Fe cation binding site. Fe cation is bound at residue H267. A helical membrane pass occupies residues 277-293 (GLWTSAFGIVGLALNLR).

This sequence belongs to the reaction center PufL/M/PsbA/D family. PSII is composed of 1 copy each of membrane proteins PsbA, PsbB, PsbC, PsbD, PsbE, PsbF, PsbH, PsbI, PsbJ, PsbK, PsbL, PsbM, PsbT, PsbX, PsbY, PsbZ, Psb30/Ycf12, at least 3 peripheral proteins of the oxygen-evolving complex and a large number of cofactors. It forms dimeric complexes. The D1/D2 heterodimer binds P680, chlorophylls that are the primary electron donor of PSII, and subsequent electron acceptors. It shares a non-heme iron and each subunit binds pheophytin, quinone, additional chlorophylls, carotenoids and lipids. There is also a Cl(-1) ion associated with D1 and D2, which is required for oxygen evolution. The PSII complex binds additional chlorophylls, carotenoids and specific lipids. is required as a cofactor.

The protein resides in the plastid. It is found in the chloroplast thylakoid membrane. The catalysed reaction is 2 a plastoquinone + 4 hnu + 2 H2O = 2 a plastoquinol + O2. Functionally, photosystem II (PSII) is a light-driven water:plastoquinone oxidoreductase that uses light energy to abstract electrons from H(2)O, generating O(2) and a proton gradient subsequently used for ATP formation. It consists of a core antenna complex that captures photons, and an electron transfer chain that converts photonic excitation into a charge separation. The D1/D2 (PsbA/PsbD) reaction center heterodimer binds P680, the primary electron donor of PSII as well as several subsequent electron acceptors. D2 is needed for assembly of a stable PSII complex. This chain is Photosystem II D2 protein, found in Gracilaria tenuistipitata var. liui (Red alga).